The primary structure comprises 559 residues: DNA ligase (559 aa).

Residue Glu247 participates in ATP binding. The N6-AMP-lysine intermediate role is filled by Lys249. The ATP site is built by Arg254, Arg269, Glu299, Phe339, Arg414, and Lys420.

This sequence belongs to the ATP-dependent DNA ligase family. Monomer. The cofactor is Mg(2+).

The enzyme catalyses ATP + (deoxyribonucleotide)n-3'-hydroxyl + 5'-phospho-(deoxyribonucleotide)m = (deoxyribonucleotide)n+m + AMP + diphosphate.. The catalysed reaction is NAD(+) + (deoxyribonucleotide)n-3'-hydroxyl + 5'-phospho-(deoxyribonucleotide)m = (deoxyribonucleotide)n+m + AMP + beta-nicotinamide D-nucleotide.. Functionally, DNA ligase that seals nicks in double-stranded DNA during DNA replication, DNA recombination and DNA repair. Can also use NAD, but less efficiently than ATP. In Thermococcus kodakarensis (strain ATCC BAA-918 / JCM 12380 / KOD1) (Pyrococcus kodakaraensis (strain KOD1)), this protein is DNA ligase.